The primary structure comprises 345 residues: Ephrin-B1 (345 aa).

The signal sequence occupies residues 1–24; it reads MARPGQRWLSKWLVAMVVLTLCRL. At 25–236 the chain is on the extracellular side; that stretch reads ATPLAKNLEP…GDSDSFFNSK (212 aa). Residues 30–164 enclose the Ephrin RBD domain; that stretch reads KNLEPVSWSS…TRTMKIVMKV (135 aa). 2 disulfide bridges follow: C64-C101 and C89-C153. N139 carries N-linked (GlcNAc...) asparagine glycosylation. A disordered region spans residues 169 to 227; that stretch reads NAVTPEQLTTSRPSKESDNTVKTATQAPGRGSQGDSDGKHETVNQEEKSGPGAGGGGSG. The span at 204 to 217 shows a compositional bias: basic and acidic residues; it reads SDGKHETVNQEEKS. Residues 237–257 traverse the membrane as a helical segment; sequence VALFAAVGAGCVIFLLIIIFL. Residues 258–345 are Cytoplasmic-facing; that stretch reads TVLLLKLRKR…QSPANIYYKV (88 aa). Positions 259-272 match the Nuclear localization signal motif; the sequence is VLLLKLRKRHRKHT. The tract at residues 262–293 is interaction with ZHX2; that stretch reads LKLRKRHRKHTQQRAAALSLSTLASPKGGSGT. Phosphoserine is present on residues S280 and S286. The short motif at 343–345 is the PDZ-binding element; that stretch reads YKV.

Belongs to the ephrin family. In terms of assembly, interacts (via PDZ-binding motif) with GRIP1 and GRIP2 (via PDZ domain 6). Interacts with TLE1. The intracellular domain peptide interacts with ZHX2; the interaction enhances ZHX2 transcriptional repression activity. Inducible phosphorylation of tyrosine residues in the cytoplasmic domain. Post-translationally, proteolytically processed. The ectodomain is cleaved, probably by a metalloprotease, to produce a membrane-tethered C-terminal fragment. This fragment is then further processed by the gamma-secretase complex to yield a soluble intracellular domain peptide which can translocate to the nucleus. The intracellular domain peptide is highly labile suggesting that it is targeted for degradation by the proteasome. In terms of tissue distribution, expressed on lateral floor plate cells, specifically on commissural axon segments that have passed through the floor plate. Expressed in cells of the retinal ganglion cell layer during retinal axon guidance to the optic disk. Expressed in myogenic progenitor cells.

The protein localises to the cell membrane. The protein resides in the membrane raft. Its subcellular location is the nucleus. Its function is as follows. Cell surface transmembrane ligand for Eph receptors, a family of receptor tyrosine kinases which are crucial for migration, repulsion and adhesion during neuronal, vascular and epithelial development. Binding to Eph receptors residing on adjacent cells leads to contact-dependent bidirectional signaling into neighboring cells. Shows high affinity for the receptor tyrosine kinase EPHB1/ELK. Can also bind EPHB2 and EPHB3. Binds to, and induces the collapse of, commissural axons/growth cones in vitro. May play a role in constraining the orientation of longitudinally projecting axons. The polypeptide is Ephrin-B1 (Efnb1) (Mus musculus (Mouse)).